A 42-amino-acid chain; its full sequence is uncharacterized protein (42 aa).

Residues 15–35 (INVCLSFFFLFYFIFVLFFAA) form a helical membrane-spanning segment.

The protein localises to the membrane. This is an uncharacterized protein from Dictyostelium discoideum (Social amoeba).